Reading from the N-terminus, the 300-residue chain is Protoheme IX farnesyltransferase 1 (300 aa).

8 consecutive transmembrane segments (helical) span residues 26–46 (VVVLMLITSLVGMFLATRAGV), 48–68 (WTVLVFGNLGIALCAGGAAAV), 97–117 (AALAFALLLALAGQALLLTFT), 120–140 (LTAWLTLASLLGYAVVYTGFL), 148–168 (IVIGGLAGAAPPLLGWVAATG), 174–194 (PLLLVLIIFAWTPPHFWALAI), 226–246 (FALLAVSLLPYVIHMSGVLYL), and 280–300 (IYYLFLLFIALLVDHYLLLNL).

The protein belongs to the UbiA prenyltransferase family. Protoheme IX farnesyltransferase subfamily.

It localises to the cell inner membrane. It carries out the reaction heme b + (2E,6E)-farnesyl diphosphate + H2O = Fe(II)-heme o + diphosphate. It functions in the pathway porphyrin-containing compound metabolism; heme O biosynthesis; heme O from protoheme: step 1/1. Functionally, converts heme B (protoheme IX) to heme O by substitution of the vinyl group on carbon 2 of heme B porphyrin ring with a hydroxyethyl farnesyl side group. The protein is Protoheme IX farnesyltransferase 1 of Pseudomonas fluorescens (strain ATCC BAA-477 / NRRL B-23932 / Pf-5).